The sequence spans 260 residues: Cytosolic Fe-S cluster assembly factor Nubp2 homolog (260 aa).

An ATP-binding site is contributed by 14 to 21 (GKGGVGKS). The [4Fe-4S] cluster site is built by Cys188 and Cys191.

It belongs to the Mrp/NBP35 ATP-binding proteins family. NUBP2/CFD1 subfamily. In terms of assembly, heterotetramer of 2 Nubp1 and 2 Nubp2 chains. The cofactor is [4Fe-4S] cluster.

The protein localises to the cytoplasm. In terms of biological role, component of the cytosolic iron-sulfur (Fe/S) protein assembly (CIA) machinery. Required for maturation of extramitochondrial Fe-S proteins. The Nubp1-Nubp2 heterotetramer forms a Fe-S scaffold complex, mediating the de novo assembly of an Fe-S cluster and its transfer to target apoproteins. This is Cytosolic Fe-S cluster assembly factor Nubp2 homolog from Drosophila melanogaster (Fruit fly).